We begin with the raw amino-acid sequence, 256 residues long: Acetyl-coenzyme A carboxylase carboxyl transferase subunit alpha (256 aa).

In terms of domain architecture, CoA carboxyltransferase C-terminal spans 1-236 (MTDVSRVLKE…KANLIEQITS (236 aa)).

The protein belongs to the AccA family. As to quaternary structure, acetyl-CoA carboxylase is a heterohexamer composed of biotin carboxyl carrier protein (AccB), biotin carboxylase (AccC) and two subunits each of ACCase subunit alpha (AccA) and ACCase subunit beta (AccD).

The protein resides in the cytoplasm. The enzyme catalyses N(6)-carboxybiotinyl-L-lysyl-[protein] + acetyl-CoA = N(6)-biotinyl-L-lysyl-[protein] + malonyl-CoA. Its pathway is lipid metabolism; malonyl-CoA biosynthesis; malonyl-CoA from acetyl-CoA: step 1/1. Functionally, component of the acetyl coenzyme A carboxylase (ACC) complex. First, biotin carboxylase catalyzes the carboxylation of biotin on its carrier protein (BCCP) and then the CO(2) group is transferred by the carboxyltransferase to acetyl-CoA to form malonyl-CoA. This Streptococcus pyogenes serotype M12 (strain MGAS2096) protein is Acetyl-coenzyme A carboxylase carboxyl transferase subunit alpha.